The sequence spans 333 residues: Beta-ketoacyl-[acyl-carrier-protein] synthase III (333 aa).

Catalysis depends on residues cysteine 116 and histidine 258. The tract at residues 259-263 (QANKR) is ACP-binding. The active site involves asparagine 288.

Belongs to the thiolase-like superfamily. FabH family. In terms of assembly, homodimer.

Its subcellular location is the cytoplasm. The enzyme catalyses malonyl-[ACP] + acetyl-CoA + H(+) = 3-oxobutanoyl-[ACP] + CO2 + CoA. Its pathway is lipid metabolism; fatty acid biosynthesis. Functionally, catalyzes the condensation reaction of fatty acid synthesis by the addition to an acyl acceptor of two carbons from malonyl-ACP. Catalyzes the first condensation reaction which initiates fatty acid synthesis and may therefore play a role in governing the total rate of fatty acid production. Possesses both acetoacetyl-ACP synthase and acetyl transacylase activities. Its substrate specificity determines the biosynthesis of branched-chain and/or straight-chain of fatty acids. This is Beta-ketoacyl-[acyl-carrier-protein] synthase III from Koribacter versatilis (strain Ellin345).